A 270-amino-acid chain; its full sequence is Small ribosomal subunit protein uS2 (270 aa).

A compositionally biased stretch (acidic residues) spans 207-225 (EEPENTEEAAEEAATEEVV). Residues 207 to 270 (EEPENTEEAA…SESAPAPVAA (64 aa)) form a disordered region. A compositionally biased stretch (low complexity) spans 226–258 (ETAAAEAAAATNADNWDVAPDAGAGAADWAATD).

This sequence belongs to the universal ribosomal protein uS2 family. In terms of assembly, component of the small ribosomal subunit. Mature ribosomes consist of a small (40S) and a large (60S) subunit. The 40S subunit contains about 33 different proteins and 1 molecule of RNA (18S). The 60S subunit contains about 49 different proteins and 3 molecules of RNA (25S, 5.8S and 5S). Interacts with RPS21.

It localises to the cytoplasm. Functionally, required for the assembly and/or stability of the 40S ribosomal subunit. Required for the processing of the 20S rRNA-precursor to mature 18S rRNA in a late step of the maturation of 40S ribosomal subunits. The protein is Small ribosomal subunit protein uS2 of Yarrowia lipolytica (strain CLIB 122 / E 150) (Yeast).